The following is a 403-amino-acid chain: Ubiquitin-like modifier-activating enzyme 5 (403 aa).

ATP contacts are provided by G81, D102, K125, N148, and N182. Residues C224 and C227 each contribute to the Zn(2+) site. Residue C248 is the Glycyl thioester intermediate of the active site. Residues C301 and C306 each contribute to the Zn(2+) site. Over residues C306–K315 the composition is skewed to basic and acidic residues. Residues C306–D337 are disordered. The short motif at V333–V345 is the UFM1-interacting sequence (UIS) element. A linker region spans residues S346–K376. Phosphoserine occurs at positions 357 and 392. The UFC1-binding sequence (UFC) signature appears at D388–M403.

Belongs to the ubiquitin-activating E1 family. UBA5 subfamily. Homodimer; homodimerization is required for UFM1 activation. Interacts (via UIS motif) with UFM1; binds UFM1 via a trans-binding mechanism in which UFM1 interacts with distinct sites in both subunits of the UBA5 homodimer. Interacts (via C-terminus) with UFC1. Interacts (via UIS motif) with GABARAPL2 and, with lower affinity, with GABARAP and GABARAPL1.

The protein localises to the cytoplasm. It is found in the nucleus. Its subcellular location is the endoplasmic reticulum membrane. It localises to the golgi apparatus. Its function is as follows. E1-like enzyme which specifically catalyzes the first step in ufmylation. Activates UFM1 by first adenylating its C-terminal glycine residue with ATP, and thereafter linking this residue to the side chain of a cysteine residue in E1, yielding a UFM1-E1 thioester and free AMP. Activates UFM1 via a trans-binding mechanism, in which UFM1 interacts with distinct sites in both subunits of the UBA5 homodimer. Trans-binding also promotes stabilization of the UBA5 homodimer, and enhances ATP-binding. Transfer of UFM1 from UBA5 to the E2-like enzyme UFC1 also takes place using a trans mechanism. Ufmylation plays a key role in various processes, such as ribosome recycling, response to DNA damage, interferon response or reticulophagy (also called ER-phagy). Ufmylation is essential for erythroid differentiation of both megakaryocytes and erythrocytes. This chain is Ubiquitin-like modifier-activating enzyme 5, found in Rattus norvegicus (Rat).